The chain runs to 246 residues: MNDITKRPSGRTADQLRDVRITRHYTKHAEGSVLVEFGDTKVICTASIAESVPAFLRDRGQGWLTAEYGMLPRATHTRSDREAARGKQTGRTQEIQRLIGRALRSVFDLERLGARTLHIDCDVIQADGGTRTASITGAFVAARDAVAKLLATGRIETSPITDYVAAISVGVFDGIPVLDLDYDEDSQCDTDMNVVMTGDGGFVEIQGTAEGVPFSRDEMNKLLDLAQAGIATLIAKQKEALESKGE.

Phosphate contacts are provided by residues R91 and 129-131 (GTR).

This sequence belongs to the RNase PH family. In terms of assembly, homohexameric ring arranged as a trimer of dimers.

It catalyses the reaction tRNA(n+1) + phosphate = tRNA(n) + a ribonucleoside 5'-diphosphate. Its function is as follows. Phosphorolytic 3'-5' exoribonuclease that plays an important role in tRNA 3'-end maturation. Removes nucleotide residues following the 3'-CCA terminus of tRNAs; can also add nucleotides to the ends of RNA molecules by using nucleoside diphosphates as substrates, but this may not be physiologically important. Probably plays a role in initiation of 16S rRNA degradation (leading to ribosome degradation) during starvation. In Paraburkholderia phymatum (strain DSM 17167 / CIP 108236 / LMG 21445 / STM815) (Burkholderia phymatum), this protein is Ribonuclease PH.